Reading from the N-terminus, the 175-residue chain is Probable RNA-binding protein EIF1AD (175 aa).

An S1-like domain is found at 5 to 89 (TKKRYITNKV…VKGEIEYILD (85 aa)). Positions 116–128 (EAKRGQTSDKMID) are enriched in basic and acidic residues. The tract at residues 116-175 (EAKRGQTSDKMIDDDMLPPSESEEEDESEGEETYDEDDVDDEEEEEFDTYNPNRMQAPSK) is disordered. The segment covering 129-163 (DDMLPPSESEEEDESEGEETYDEDDVDDEEEEEFD) has biased composition (acidic residues). A compositionally biased stretch (polar residues) spans 165-175 (YNPNRMQAPSK).

This sequence belongs to the EIF1AD family.

In Caenorhabditis elegans, this protein is Probable RNA-binding protein EIF1AD.